Reading from the N-terminus, the 788-residue chain is MAMESTATAAVAAELVSADKIEDVPAPSTSADKVESLDVDSEAKKLLGLGQKHLVMGDIPAAVNAFQEAASLLGKKYGETANECGEAFFFYGKSLLELARMENGVLGNALEGVHVEEEEGEKTEDESLVENNDNIDEEAREELREQVYDAMGEKEEAKKTEDKSLAKPETDKEQDSEMEKGGREDMDISKSAEEPQEKVDLTLDWLTETSEEAKGGAAPEGPNEAEVTSGKPEQEVPDAEEEKSVSGTDVQEECREKGGQEKQGEVIVSIEEKPKEVSEEQPVVTLEKQGTAVEVEAESLDPTVKPVDVGGDEPEEKVVTSENEAGKAVLEQLVGQEVPPAEESPEVTTEAAEASAVEAGSEVSEKPGQEAPVLPKDGAVNGPSVVGDQTPIEPQTSIERLTETKDGSGLEEKVRAKLVPSQEETKLSVEESEAAGDGVDTKVAQGATEKSPEDKVQIAANEETQEREEQMKEGEETEGSEEDDKENDKTEEMPNDSVLENKSLQENEEEEIGNLELAWDMLDLAKIIFKRQETKEAQLYAAQAHLKLGEVSVESENYVQAVEEFQSCLNLQEQYLEAHDRLLAETHYQLGLAYGYNSQYDEAVAQFSKSIEVIENRMAVLNEQVKEAEGSSAEYKKEIEELKELLPEIREKIEDAKESQRSGNVAELALKATLVESSTSGFTPGGGGSSVSMIASRKPTDGASSSNCVTDISHLVRKKRKPEEESPRKDDAKKAKQEPEVNGGSGDAVPSGNEVSENMEEEAENQAESRAAVEGTVEAGATVESTAC.

At Ala2 the chain carries N-acetylalanine. Lys33 is subject to N6-acetyllysine. A TPR 1 repeat occupies 43 to 76 (AKKLLGLGQKHLVMGDIPAAVNAFQEAASLLGKK). The interval 114 to 139 (HVEEEEGEKTEDESLVENNDNIDEEA) is disordered. The tract at residues 116-127 (EEEEGEKTEDES) is histone-binding. The span at 116-139 (EEEEGEKTEDESLVENNDNIDEEA) shows a compositional bias: acidic residues. At Thr123 the chain carries Phosphothreonine. The residue at position 127 (Ser127) is a Phosphoserine. Glu138 is subject to Phosphothreonine. Residue Glu141 is modified to Phosphoserine. Residues 151 to 201 (MGEKEEAKKTEDKSLAKPETDKEQDSEMEKGGREDMDISKSAEEPQEKVDL) show a composition bias toward basic and acidic residues. A disordered region spans residues 151–507 (MGEKEEAKKT…VLENKSLQEN (357 aa)). The residue at position 170 (Thr170) is a Phosphothreonine. Phosphoserine is present on residues Ser176, Ser189, and Ser191. The interval 211–244 (EEAKGGAAPEGPNEAEVTSGKPEQEVPDAEEEKS) is histone-binding. Lys243 bears the N6-acetyllysine mark. The residue at position 244 (Ser244) is a Phosphoserine. The segment covering 252 to 278 (EECREKGGQEKQGEVIVSIEEKPKEVS) has biased composition (basic and acidic residues). Lys288 bears the N6-acetyllysine mark. Residues Ser299 and Ser321 each carry the phosphoserine modification. Residues 337-362 (EVPPAEESPEVTTEAAEASAVEAGSE) show a composition bias toward low complexity. Phosphothreonine is present on Thr390. A phosphoserine mark is found at Ser397, Ser408, Ser421, and Ser451. The span at 400 to 415 (RLTETKDGSGLEEKVR) shows a compositional bias: basic and acidic residues. Phosphothreonine is present on residues Thr464 and Thr477. Residues 469–512 (EQMKEGEETEGSEEDDKENDKTEEMPNDSVLENKSLQENEEEEI) form a histone-binding region. The span at 475-485 (EETEGSEEDDK) shows a compositional bias: acidic residues. Position 480 is a phosphoserine (Ser480). Thr490 carries the post-translational modification Phosphothreonine. 2 positions are modified to phosphoserine: Ser497 and Ser503. TPR repeat units lie at residues 542-575 (AQAH…QEQY) and 584-617 (AETH…IENR). Residues 604 to 659 (VAQFSKSIEVIENRMAVLNEQVKEAEGSSAEYKKEIEELKELLPEIREKIEDAKES) adopt a coiled-coil conformation. Ser662 is modified (phosphoserine). Residues 678-788 (STSGFTPGGG…AGATVESTAC (111 aa)) are disordered. Thr683 is subject to Phosphothreonine. Phosphoserine occurs at positions 705 and 706. The Nuclear localization signal signature appears at 716-722 (VRKKRKP). The span at 721–739 (KPEEESPRKDDAKKAKQEP) shows a compositional bias: basic and acidic residues. Phosphoserine is present on Ser726. Residue Lys736 forms a Glycyl lysine isopeptide (Lys-Gly) (interchain with G-Cter in SUMO1) linkage. Ser745, Ser751, and Ser756 each carry phosphoserine.

It belongs to the NASP family. In terms of assembly, binds to linker H1 histones. Interacts with histones H2A, H2B, H3 and H4. Interacts with histone H3.3. Interacts with histones H3 and H4; NASP is a histone chaperone that stabilizes and maintains a soluble pool of histone H3-H4 dimers. Interacts with ASF1A and ASF1B; the interaction is probably indirect and mediated by H3-H4. Also binds to HSP90 in the cytoplasm; this interaction stimulates binding of NASP to H1-6/H1T. As to expression, isoform 1 is testis- and sperm-specific.

The protein localises to the cytoplasm. It localises to the nucleus. Its function is as follows. Component of the histone chaperone network. Binds and stabilizes histone H3-H4 not bound to chromatin to maintain a soluble reservoir and modulate degradation by chaperone-mediated autophagy. Required for DNA replication, normal cell cycle progression and cell proliferation. Forms a cytoplasmic complex with HSP90 and H1 linker histones and stimulates HSP90 ATPase activity. NASP and H1 histone are subsequently released from the complex and translocate to the nucleus where the histone is released for binding to DNA. Stabilizes soluble histone H3-H4. This chain is Nuclear autoantigenic sperm protein (NASP), found in Homo sapiens (Human).